The chain runs to 216 residues: Octanoyltransferase (216 aa).

The BPL/LPL catalytic domain maps to 30–204 (KNNINEIWLL…NCKKFLMMNN (175 aa)). Substrate is bound by residues 68-75 (RGGHMTFH), 135-137 (SIG), and 148-150 (GLA). The active-site Acyl-thioester intermediate is the Cys-166.

It belongs to the LipB family.

Its subcellular location is the cytoplasm. The enzyme catalyses octanoyl-[ACP] + L-lysyl-[protein] = N(6)-octanoyl-L-lysyl-[protein] + holo-[ACP] + H(+). The protein operates within protein modification; protein lipoylation via endogenous pathway; protein N(6)-(lipoyl)lysine from octanoyl-[acyl-carrier-protein]: step 1/2. Catalyzes the transfer of endogenously produced octanoic acid from octanoyl-acyl-carrier-protein onto the lipoyl domains of lipoate-dependent enzymes. Lipoyl-ACP can also act as a substrate although octanoyl-ACP is likely to be the physiological substrate. This is Octanoyltransferase from Wigglesworthia glossinidia brevipalpis.